We begin with the raw amino-acid sequence, 141 residues long: Protein X (141 aa).

Over residues 24-48 (QSSGPSFPRPAAGSAASSASSPSPS) the composition is skewed to low complexity. The interval 24–52 (QSSGPSFPRPAAGSAASSASSPSPSDESD) is disordered. The segment at 68–113 (PCCLVFTCAELRTMDSTVNFVSWHANRQLGMPSKDLWTPYIKDQLL) is mitochondrial targeting sequence.

It belongs to the orthohepadnavirus protein X family. As to quaternary structure, may form homodimer. May interact with host CEBPA, CFLAR, CREB1, DDB1, E4F1, HBXIP, HSPD1/HSP60, NFKBIA, POLR2E and SMAD4. Interacts with host SMC5-SMC6 complex and induces its degradation. Interacts with host TRPC4AP; leading to prevent ubiquitination of TRPC4AP. Interacts with host PLSCR1; this interaction promotes ubiquitination and degradation of HBx and impairs HBx-mediated cell proliferation. Post-translationally, a fraction may be phosphorylated in insect cells and HepG2 cells, a human hepatoblastoma cell line. Phosphorylated in vitro by host protein kinase C or mitogen-activated protein kinase. N-acetylated in insect cells.

The protein resides in the host cytoplasm. The protein localises to the host nucleus. It localises to the host mitochondrion. Its function is as follows. Multifunctional protein that plays a role in silencing host antiviral defenses and promoting viral transcription. Does not seem to be essential for HBV infection. May be directly involved in development of cirrhosis and liver cancer (hepatocellular carcinoma). Most of cytosolic activities involve modulation of cytosolic calcium. The effect on apoptosis is controversial depending on the cell types in which the studies have been conducted. May induce apoptosis by localizing in mitochondria and causing loss of mitochondrial membrane potential. May also modulate apoptosis by binding host CFLAR, a key regulator of the death-inducing signaling complex (DISC). Promotes viral transcription by using the host E3 ubiquitin ligase DDB1 to target the SMC5-SMC6 complex to proteasomal degradation. This host complex would otherwise bind to viral episomal DNA, and prevents its transcription. Moderately stimulates transcription of many different viral and cellular transcription elements. Promoters and enhancers stimulated by HBx contain DNA binding sites for NF-kappa-B, AP-1, AP-2, c-EBP, ATF/CREB, or the calcium-activated factor NF-AT. The polypeptide is Protein X (Woodchuck hepatitis B virus (isolate 7) (WHV)).